We begin with the raw amino-acid sequence, 405 residues long: Phosphoglycerate kinase (405 aa).

Residues 21–23 (DFN), Arg-36, 59–62 (HLGR), Arg-119, and Arg-161 contribute to the substrate site. Residues Lys-212, Gly-301, Glu-332, and 361-364 (GGDS) contribute to the ATP site.

Belongs to the phosphoglycerate kinase family. As to quaternary structure, monomer.

Its subcellular location is the cytoplasm. It catalyses the reaction (2R)-3-phosphoglycerate + ATP = (2R)-3-phospho-glyceroyl phosphate + ADP. It participates in carbohydrate degradation; glycolysis; pyruvate from D-glyceraldehyde 3-phosphate: step 2/5. The chain is Phosphoglycerate kinase from Leuconostoc mesenteroides subsp. mesenteroides (strain ATCC 8293 / DSM 20343 / BCRC 11652 / CCM 1803 / JCM 6124 / NCDO 523 / NBRC 100496 / NCIMB 8023 / NCTC 12954 / NRRL B-1118 / 37Y).